The following is a 386-amino-acid chain: Erythronate-4-phosphate dehydrogenase (386 aa).

Substrate-binding residues include serine 59 and threonine 81. Aspartate 162 provides a ligand contact to NAD(+). Arginine 239 is an active-site residue. Position 262 (aspartate 262) interacts with NAD(+). Residue glutamate 267 is part of the active site. The active-site Proton donor is the histidine 284. Residue glycine 287 participates in NAD(+) binding. Tyrosine 288 is a substrate binding site.

This sequence belongs to the D-isomer specific 2-hydroxyacid dehydrogenase family. PdxB subfamily. Homodimer.

The protein resides in the cytoplasm. The enzyme catalyses 4-phospho-D-erythronate + NAD(+) = (R)-3-hydroxy-2-oxo-4-phosphooxybutanoate + NADH + H(+). It functions in the pathway cofactor biosynthesis; pyridoxine 5'-phosphate biosynthesis; pyridoxine 5'-phosphate from D-erythrose 4-phosphate: step 2/5. Catalyzes the oxidation of erythronate-4-phosphate to 3-hydroxy-2-oxo-4-phosphonooxybutanoate. The chain is Erythronate-4-phosphate dehydrogenase from Psychrobacter cryohalolentis (strain ATCC BAA-1226 / DSM 17306 / VKM B-2378 / K5).